Here is a 139-residue protein sequence, read N- to C-terminus: Peptide methionine sulfoxide reductase MsrB (139 aa).

The 123-residue stretch at 8 to 130 folds into the MsrB domain; sequence EREWQRELSP…NSASLQLKTD (123 aa). Residues Cys-47, Cys-50, Cys-96, and Cys-99 each contribute to the Zn(2+) site. Cys-119 serves as the catalytic Nucleophile.

Belongs to the MsrB Met sulfoxide reductase family. It depends on Zn(2+) as a cofactor.

The enzyme catalyses L-methionyl-[protein] + [thioredoxin]-disulfide + H2O = L-methionyl-(R)-S-oxide-[protein] + [thioredoxin]-dithiol. The protein is Peptide methionine sulfoxide reductase MsrB of Acinetobacter baylyi (strain ATCC 33305 / BD413 / ADP1).